Here is a 358-residue protein sequence, read N- to C-terminus: Pre-mRNA-splicing factor spp2 (358 aa).

Disordered stretches follow at residues 1-250 (MTDQ…RAVP) and 298-358 (AWNQ…RGDR). The span at 24–40 (KTKKPSRPTHTRRHHAR) shows a compositional bias: basic residues. 2 stretches are compositionally biased toward basic and acidic residues: residues 80–137 (LENR…DASR) and 145–160 (RSRDRDHKPKDPKDLQ). A compositionally biased stretch (polar residues) spans 174–185 (NPKSTTTATSSF). Composition is skewed to basic and acidic residues over residues 233–246 (SSHDRDRSPDHSDY) and 309–358 (GDSR…RGDR).

Belongs to the SPP2 family. Associated with the spliceosome.

It is found in the nucleus. Its function is as follows. Involved in spliceosome maturation and the first step of pre-mRNA splicing. This is Pre-mRNA-splicing factor spp2 (msp-40) from Neurospora crassa (strain ATCC 24698 / 74-OR23-1A / CBS 708.71 / DSM 1257 / FGSC 987).